Reading from the N-terminus, the 84-residue chain is UPF0410 protein YmgE (84 aa).

3 helical membrane passes run M1 to M21, G27 to A47, and G58 to F78.

Belongs to the UPF0410 family.

Its subcellular location is the cell inner membrane. The sequence is that of UPF0410 protein YmgE (ymgE) from Escherichia coli (strain K12).